The chain runs to 303 residues: tRNA (guanine-N(7)-)-methyltransferase (303 aa).

Residues 1–64 (MPKPHQVQVI…STSDKISLPR (64 aa)) are disordered. Residues 10-38 (IKDRETQLREQQEAESKRRTYRDVKEETR) are compositionally biased toward basic and acidic residues. S-adenosyl-L-methionine contacts are provided by residues Gly118, 141–142 (EI), 177–178 (NA), and Cys197. Residue Asp200 is part of the active site. Position 275–277 (275–277 (TEE)) interacts with S-adenosyl-L-methionine.

This sequence belongs to the class I-like SAM-binding methyltransferase superfamily. TrmB family. As to quaternary structure, forms a complex with TRM82.

The protein resides in the nucleus. The catalysed reaction is guanosine(46) in tRNA + S-adenosyl-L-methionine = N(7)-methylguanosine(46) in tRNA + S-adenosyl-L-homocysteine. It participates in tRNA modification; N(7)-methylguanine-tRNA biosynthesis. Functionally, catalyzes the formation of N(7)-methylguanine at position 46 (m7G46) in tRNA. This Scheffersomyces stipitis (strain ATCC 58785 / CBS 6054 / NBRC 10063 / NRRL Y-11545) (Yeast) protein is tRNA (guanine-N(7)-)-methyltransferase.